We begin with the raw amino-acid sequence, 550 residues long: Mitochondrial distribution and morphology protein 34 (550 aa).

One can recognise an SMP-LTD domain in the interval M1–H208. Disordered stretches follow at residues V294 to S313, R358 to Q505, and V519 to S550. A compositionally biased stretch (low complexity) spans S300–L310. Residues A364–R376 show a composition bias toward basic residues. Polar residues-rich tracts occupy residues M391–D407 and A458–R467. Over residues S481 to R495 the composition is skewed to basic and acidic residues.

Belongs to the MDM34 family. In terms of assembly, component of the ER-mitochondria encounter structure (ERMES) or MDM complex, composed of MMM1, MDM10, MDM12 and MDM34.

The protein resides in the mitochondrion outer membrane. Its function is as follows. Component of the ERMES/MDM complex, which serves as a molecular tether to connect the endoplasmic reticulum (ER) and mitochondria. Components of this complex are involved in the control of mitochondrial shape and protein biogenesis, and function in nonvesicular lipid trafficking between the ER and mitochondria. MDM34 is required for the interaction of the ER-resident membrane protein MMM1 and the outer mitochondrial membrane-resident beta-barrel protein MDM10. The protein is Mitochondrial distribution and morphology protein 34 of Pyricularia oryzae (strain 70-15 / ATCC MYA-4617 / FGSC 8958) (Rice blast fungus).